A 391-amino-acid polypeptide reads, in one-letter code: 3-ketoacyl-CoA thiolase (391 aa).

Catalysis depends on Cys95, which acts as the Acyl-thioester intermediate. Residues His347 and Cys377 each act as proton acceptor in the active site.

Belongs to the thiolase-like superfamily. Thiolase family. Heterotetramer of two alpha chains (FadB) and two beta chains (FadA).

The protein resides in the cytoplasm. It carries out the reaction an acyl-CoA + acetyl-CoA = a 3-oxoacyl-CoA + CoA. It functions in the pathway lipid metabolism; fatty acid beta-oxidation. Catalyzes the final step of fatty acid oxidation in which acetyl-CoA is released and the CoA ester of a fatty acid two carbons shorter is formed. This Pseudomonas savastanoi pv. phaseolicola (strain 1448A / Race 6) (Pseudomonas syringae pv. phaseolicola (strain 1448A / Race 6)) protein is 3-ketoacyl-CoA thiolase.